A 406-amino-acid chain; its full sequence is Cysteine desulfurase (406 aa).

Lysine 226 is modified (N6-(pyridoxal phosphate)lysine). Cysteine 364 acts as the Cysteine persulfide intermediate in catalysis.

This sequence belongs to the class-V pyridoxal-phosphate-dependent aminotransferase family. Csd subfamily. Homodimer. Interacts with SufE and the SufBCD complex composed of SufB, SufC and SufD. The interaction with SufE is required to mediate the direct transfer of the sulfur atom from the S-sulfanylcysteine. The cofactor is pyridoxal 5'-phosphate.

Its subcellular location is the cytoplasm. It catalyses the reaction (sulfur carrier)-H + L-cysteine = (sulfur carrier)-SH + L-alanine. The enzyme catalyses L-selenocysteine + AH2 = hydrogenselenide + L-alanine + A + H(+). The protein operates within cofactor biosynthesis; iron-sulfur cluster biosynthesis. Functionally, cysteine desulfurases mobilize the sulfur from L-cysteine to yield L-alanine, an essential step in sulfur metabolism for biosynthesis of a variety of sulfur-containing biomolecules. Component of the suf operon, which is activated and required under specific conditions such as oxidative stress and iron limitation. Acts as a potent selenocysteine lyase in vitro, that mobilizes selenium from L-selenocysteine. Selenocysteine lyase activity is however unsure in vivo. The chain is Cysteine desulfurase from Yersinia pseudotuberculosis serotype O:1b (strain IP 31758).